Consider the following 169-residue polypeptide: Succinate dehydrogenase cytochrome b560 subunit, mitochondrial (169 aa).

The transit peptide at 1-29 (MAAFLLRHVSRHCLRAHLNAQLCIRNAAP) directs the protein to the mitochondrion. Over 30-62 (LGTTAKEEMERFWKKNTSSNRPLSPHLTIYKWS) the chain is Mitochondrial matrix. The chain crosses the membrane as a helical span at residues 63-92 (LPMALSVCHRGSGIALSGGVSLFGLSALLL). Over 93–112 (PGNFESYLMFVKSLCLGPTL) the chain is Mitochondrial intermembrane. Residues 113–137 (IYSAKFVLVFPLMYHSLNGIRHLLW) traverse the membrane as a helical segment. His-127 lines the heme b pocket. Topologically, residues 138-144 (DLGKGLA) are mitochondrial matrix. Residues 145-166 (IPQVWLSGVAVVVLAVLSSGGL) form a helical membrane-spanning segment. Residues 167–169 (AAL) are Mitochondrial intermembrane-facing.

This sequence belongs to the cytochrome b560 family. Component of complex II composed of four subunits: the flavoprotein (FP) SDHA, iron-sulfur protein (IP) SDHB, and a cytochrome b560 composed of SDHC and SDHD. The cofactor is heme b.

Its subcellular location is the mitochondrion inner membrane. It participates in carbohydrate metabolism; tricarboxylic acid cycle. Its function is as follows. Membrane-anchoring subunit of succinate dehydrogenase (SDH) that is involved in complex II of the mitochondrial electron transport chain and is responsible for transferring electrons from succinate to ubiquinone (coenzyme Q). SDH also oxidizes malate to the non-canonical enol form of oxaloacetate, enol-oxaloacetate. Enol-oxaloacetate, which is a potent inhibitor of the succinate dehydrogenase activity, is further isomerized into keto-oxaloacetate. In Mus musculus (Mouse), this protein is Succinate dehydrogenase cytochrome b560 subunit, mitochondrial (Sdhc).